The primary structure comprises 176 residues: Glutamyl-tRNA(Gln) amidotransferase subunit F, mitochondrial (176 aa).

Belongs to the GatF family. Subunit of the heterotrimeric GatFAB amidotransferase (AdT) complex, composed of A, B and F subunits.

The protein resides in the mitochondrion inner membrane. The catalysed reaction is L-glutamyl-tRNA(Gln) + L-glutamine + ATP + H2O = L-glutaminyl-tRNA(Gln) + L-glutamate + ADP + phosphate + H(+). In terms of biological role, allows the formation of correctly charged Gln-tRNA(Gln) through the transamidation of misacylated Glu-tRNA(Gln) in the mitochondria. The reaction takes place in the presence of glutamine and ATP through an activated gamma-phospho-Glu-tRNA(Gln). Required for proper protein synthesis within the mitochondrion. This is Glutamyl-tRNA(Gln) amidotransferase subunit F, mitochondrial from Yarrowia lipolytica (strain CLIB 122 / E 150) (Yeast).